The following is a 486-amino-acid chain: Cardiolipin synthase A (486 aa).

A run of 2 helical transmembrane segments spans residues 3 to 23 (TVYTLVSWLAILGYWLLIAGV) and 38 to 58 (MAWLLIIYILPLVGIIAYLAV). PLD phosphodiesterase domains lie at 219 to 246 (MDLRQHRKMIMIDNYIAYTGSMNMVDPR) and 399 to 426 (EGGLLHTKSVLVDGELSLVGTVNLDMRS). Catalysis depends on residues H224, K226, D231, H404, K406, and D411.

This sequence belongs to the phospholipase D family. Cardiolipin synthase subfamily. ClsA sub-subfamily.

The protein localises to the cell inner membrane. It catalyses the reaction 2 a 1,2-diacyl-sn-glycero-3-phospho-(1'-sn-glycerol) = a cardiolipin + glycerol. In terms of biological role, catalyzes the reversible phosphatidyl group transfer from one phosphatidylglycerol molecule to another to form cardiolipin (CL) (diphosphatidylglycerol) and glycerol. The chain is Cardiolipin synthase A from Shigella boydii serotype 4 (strain Sb227).